Reading from the N-terminus, the 266-residue chain is MSAVDTPTGAASSSKPDQNEQNGQNGGREDSGGFKLKFCTVCASNQNRSMEGHLRLSLANYPVISFGTGSLVRLPGPSITQPNVYKFNETSYDSIYRELEAKDPRLYRANGLLNMLGRNRQVKWGPERWQDWQIGMPRTKHKDDKGADGMEGGVADVVITCEERCWDAVIEDLLNRGSPLNRPVHVINIDIKDNHEEASVGGRAIVDLADSLNKIAAEEREKVGASAFDSGSVGARSGFDERVPDVLAEWQERWPNLPATWTLAWF.

Residues 1–31 are disordered; the sequence is MSAVDTPTGAASSSKPDQNEQNGQNGGREDS. Residues 9-23 show a composition bias toward polar residues; the sequence is GAASSSKPDQNEQNG.

The protein belongs to the SSU72 phosphatase family. Component of the cleavage and polyadenylation factor (CPF) complex.

Its subcellular location is the nucleus. The enzyme catalyses O-phospho-L-seryl-[protein] + H2O = L-seryl-[protein] + phosphate. It carries out the reaction O-phospho-L-threonyl-[protein] + H2O = L-threonyl-[protein] + phosphate. Processively dephosphorylates Ser-5 of the heptad repeats YSPTSPS in the C-terminal domain of the largest RNA polymerase II subunit (rpb-1). In terms of biological role, component of the cleavage and polyadenylation factor (CPF) complex, which plays a key role in polyadenylation-dependent pre-mRNA 3'-end formation and cooperates with cleavage factors including the CFIA complex and NAB4/CFIB. Ssu-72 is required for 3'-end formation of snoRNAs. The chain is RNA polymerase II subunit A C-terminal domain phosphatase ssu-72 (ssu-72) from Neurospora crassa (strain ATCC 24698 / 74-OR23-1A / CBS 708.71 / DSM 1257 / FGSC 987).